Consider the following 143-residue polypeptide: Large ribosomal subunit protein uL11 (143 aa).

Belongs to the universal ribosomal protein uL11 family. Part of the ribosomal stalk of the 50S ribosomal subunit. Interacts with L10 and the large rRNA to form the base of the stalk. L10 forms an elongated spine to which L12 dimers bind in a sequential fashion forming a multimeric L10(L12)X complex. One or more lysine residues are methylated.

In terms of biological role, forms part of the ribosomal stalk which helps the ribosome interact with GTP-bound translation factors. The sequence is that of Large ribosomal subunit protein uL11 from Kineococcus radiotolerans (strain ATCC BAA-149 / DSM 14245 / SRS30216).